The primary structure comprises 386 residues: Citrate synthase (386 aa).

Catalysis depends on residues His-266 and Asp-322.

Belongs to the citrate synthase family.

The enzyme catalyses oxaloacetate + acetyl-CoA + H2O = citrate + CoA + H(+). The protein operates within carbohydrate metabolism; tricarboxylic acid cycle; isocitrate from oxaloacetate: step 1/2. The chain is Citrate synthase (gltA) from Acidithiobacillus ferridurans.